The sequence spans 161 residues: Small ribosomal subunit protein uS19 (161 aa).

Basic residues predominate over residues 1-19; the sequence is MARQKKYSGKGGARKKNKQ. Positions 1 to 26 are disordered; it reads MARQKKYSGKGGARKKNKQKQNVAPR.

This sequence belongs to the universal ribosomal protein uS19 family.

Its function is as follows. Protein S19 forms a complex with S13 that binds strongly to the 16S ribosomal RNA. The sequence is that of Small ribosomal subunit protein uS19 from Methanococcus maripaludis (strain DSM 14266 / JCM 13030 / NBRC 101832 / S2 / LL).